The primary structure comprises 338 residues: DNA-directed RNA polymerase subunit alpha (338 aa).

An alpha N-terminal domain (alpha-NTD) region spans residues 1–230 (MRKITTSAYM…QQMSVFKGIL (230 aa)). Positions 247-338 (FSKLLSSVED…ELKSQMSAKE (92 aa)) are alpha C-terminal domain (alpha-CTD).

Belongs to the RNA polymerase alpha chain family. In terms of assembly, homodimer. The RNAP catalytic core consists of 2 alpha, 1 beta, 1 beta' and 1 omega subunit. When a sigma factor is associated with the core the holoenzyme is formed, which can initiate transcription.

It carries out the reaction RNA(n) + a ribonucleoside 5'-triphosphate = RNA(n+1) + diphosphate. DNA-dependent RNA polymerase catalyzes the transcription of DNA into RNA using the four ribonucleoside triphosphates as substrates. This Campylobacter concisus (strain 13826) protein is DNA-directed RNA polymerase subunit alpha.